We begin with the raw amino-acid sequence, 232 residues long: Orotidine 5'-phosphate decarboxylase (232 aa).

Substrate is bound by residues Asp11, Lys33, 60-69, Thr120, Arg181, Gln190, Gly210, and Arg211; that span reads DLKFHDIPNT. Lys62 serves as the catalytic Proton donor.

Belongs to the OMP decarboxylase family. Type 1 subfamily. In terms of assembly, homodimer.

The catalysed reaction is orotidine 5'-phosphate + H(+) = UMP + CO2. The protein operates within pyrimidine metabolism; UMP biosynthesis via de novo pathway; UMP from orotate: step 2/2. Its function is as follows. Catalyzes the decarboxylation of orotidine 5'-monophosphate (OMP) to uridine 5'-monophosphate (UMP). This chain is Orotidine 5'-phosphate decarboxylase, found in Vibrio vulnificus (strain CMCP6).